Reading from the N-terminus, the 86-residue chain is MEERDDIITLLDEEGKEQDFEVIMTLEVEGNEYAILAPVDSDEDEDAYVFKIVYENEDEYSLVTIEDDEEYDNVVAAYETLMDEEM.

The protein belongs to the UPF0473 family.

This is UPF0473 protein Clos_1662 from Alkaliphilus oremlandii (strain OhILAs) (Clostridium oremlandii (strain OhILAs)).